The primary structure comprises 207 residues: Probable GTP-binding protein EngB (207 aa).

The EngB-type G domain occupies 23–197; it reads AGIEVVFAGR…ETVIGRWLFA (175 aa). GTP is bound by residues 31–38, 58–62, 76–79, 143–146, and 176–178; these read GRSNAGKS, GRTQL, DLPG, TKAD, and FSS. Residues serine 38 and threonine 60 each contribute to the Mg(2+) site.

It belongs to the TRAFAC class TrmE-Era-EngA-EngB-Septin-like GTPase superfamily. EngB GTPase family. Requires Mg(2+) as cofactor.

Necessary for normal cell division and for the maintenance of normal septation. The sequence is that of Probable GTP-binding protein EngB from Methylobacillus flagellatus (strain ATCC 51484 / DSM 6875 / VKM B-1610 / KT).